A 147-amino-acid chain; its full sequence is Hemoglobin subunit gamma (147 aa).

A Globin domain is found at Asn-3–His-147. 2 residues coordinate heme b: His-64 and His-93.

It belongs to the globin family. In terms of assembly, heterotetramer of two alpha chains and two gamma chains in fetal hemoglobin (Hb F). As to expression, red blood cells.

In terms of biological role, gamma chains make up the fetal hemoglobin F, in combination with alpha chains. This Callithrix jacchus (White-tufted-ear marmoset) protein is Hemoglobin subunit gamma (HBG1).